A 262-amino-acid polypeptide reads, in one-letter code: F-actin-capping protein subunit alpha (262 aa).

This sequence belongs to the F-actin-capping protein alpha subunit family. In terms of assembly, heterodimer of an alpha and a beta subunit.

In terms of biological role, F-actin-capping proteins bind in a Ca(2+)-independent manner to the fast growing ends of actin filaments (barbed end) thereby blocking the exchange of subunits at these ends. Unlike other capping proteins (such as gelsolin and severin), these proteins do not sever actin filaments. In Candida glabrata (strain ATCC 2001 / BCRC 20586 / JCM 3761 / NBRC 0622 / NRRL Y-65 / CBS 138) (Yeast), this protein is F-actin-capping protein subunit alpha (CAP1).